We begin with the raw amino-acid sequence, 313 residues long: Ribosomal RNA small subunit methyltransferase H (313 aa).

S-adenosyl-L-methionine contacts are provided by residues 35–37 (GGH), D55, F81, D103, and Q110.

The protein belongs to the methyltransferase superfamily. RsmH family.

The protein resides in the cytoplasm. The catalysed reaction is cytidine(1402) in 16S rRNA + S-adenosyl-L-methionine = N(4)-methylcytidine(1402) in 16S rRNA + S-adenosyl-L-homocysteine + H(+). Its function is as follows. Specifically methylates the N4 position of cytidine in position 1402 (C1402) of 16S rRNA. In Pseudomonas syringae pv. syringae (strain B728a), this protein is Ribosomal RNA small subunit methyltransferase H.